Here is a 229-residue protein sequence, read N- to C-terminus: Vacuolar protein sorting-associated protein 24 homolog 1 (229 aa).

Positions 15–60 (KQLLRDWQRKLRQECRNIERQIRDIQKEERNVQKAIKEAAKRNDMV) form a coiled coil. A disordered region spans residues 193 to 215 (VPAQKASTSREEEAVAEGVDDEE). Acidic residues predominate over residues 206–215 (AVAEGVDDEE).

This sequence belongs to the SNF7 family. As to quaternary structure, component of the endosomal sorting required for transport complex III (ESCRT-III), composed at least of VPS2, VPS20, VPS24 and VPS32. Interacts with SKD1.

Its subcellular location is the endosome. In terms of biological role, component of the ESCRT-III complex, which is required for multivesicular bodies (MVBs) formation and sorting of endosomal cargo proteins into MVBs. The ESCRT-III complex is probably involved in the concentration of MVB cargo. This is Vacuolar protein sorting-associated protein 24 homolog 1 (VPS24-1) from Arabidopsis thaliana (Mouse-ear cress).